Consider the following 444-residue polypeptide: UDP-N-acetylglucosamine 1-carboxyvinyltransferase (444 aa).

22-23 (KN) lines the phosphoenolpyruvate pocket. Arginine 94 contributes to the UDP-N-acetyl-alpha-D-glucosamine binding site. The Proton donor role is filled by aspartate 119. The UDP-N-acetyl-alpha-D-glucosamine site is built by aspartate 309 and valine 331.

Belongs to the EPSP synthase family. MurA subfamily.

Its subcellular location is the cytoplasm. The enzyme catalyses phosphoenolpyruvate + UDP-N-acetyl-alpha-D-glucosamine = UDP-N-acetyl-3-O-(1-carboxyvinyl)-alpha-D-glucosamine + phosphate. It participates in cell wall biogenesis; peptidoglycan biosynthesis. Functionally, cell wall formation. Adds enolpyruvyl to UDP-N-acetylglucosamine. The polypeptide is UDP-N-acetylglucosamine 1-carboxyvinyltransferase (Chlamydia trachomatis serovar A (strain ATCC VR-571B / DSM 19440 / HAR-13)).